A 427-amino-acid chain; its full sequence is 3-phosphoshikimate 1-carboxyvinyltransferase (427 aa).

The 3-phosphoshikimate site is built by K20, S21, and R25. Phosphoenolpyruvate is bound at residue K20. Positions 92 and 120 each coordinate phosphoenolpyruvate. 3-phosphoshikimate contacts are provided by S166, Q168, D312, and K339. A phosphoenolpyruvate-binding site is contributed by Q168. D312 (proton acceptor) is an active-site residue. Residues R343 and R385 each contribute to the phosphoenolpyruvate site.

Belongs to the EPSP synthase family. Monomer.

Its subcellular location is the cytoplasm. It carries out the reaction 3-phosphoshikimate + phosphoenolpyruvate = 5-O-(1-carboxyvinyl)-3-phosphoshikimate + phosphate. It participates in metabolic intermediate biosynthesis; chorismate biosynthesis; chorismate from D-erythrose 4-phosphate and phosphoenolpyruvate: step 6/7. Its function is as follows. Catalyzes the transfer of the enolpyruvyl moiety of phosphoenolpyruvate (PEP) to the 5-hydroxyl of shikimate-3-phosphate (S3P) to produce enolpyruvyl shikimate-3-phosphate and inorganic phosphate. The chain is 3-phosphoshikimate 1-carboxyvinyltransferase from Streptococcus thermophilus (strain ATCC BAA-250 / LMG 18311).